Reading from the N-terminus, the 157-residue chain is Vitamin K-dependent protein C (157 aa).

The region spanning 1 to 157 (ENGEVDLDIQ…GCGRLHNYGV (157 aa)) is the Peptidase S1 domain. A glycan (N-linked (GlcNAc...) asparagine) is linked at N17. The active-site Charge relay system is D26. An N-linked (GlcNAc...) asparagine glycan is attached at N78. Intrachain disulfides connect C96-C110 and C121-C149. The Charge relay system role is filled by S125.

This sequence belongs to the peptidase S1 family. In terms of tissue distribution, plasma; synthesized in the liver.

The protein localises to the secreted. Its subcellular location is the golgi apparatus. The protein resides in the endoplasmic reticulum. The catalysed reaction is Degradation of blood coagulation factors Va and VIIIa.. Protein C is a vitamin K-dependent serine protease that regulates blood coagulation by inactivating factors Va and VIIIa in the presence of calcium ions and phospholipids. Exerts a protective effect on the endothelial cell barrier function. This Equus caballus (Horse) protein is Vitamin K-dependent protein C (PROC).